Consider the following 358-residue polypeptide: Magnesium-protoporphyrin IX monomethyl ester [oxidative] cyclase 3 (358 aa).

Belongs to the AcsF family. The cofactor is Fe cation.

The catalysed reaction is Mg-protoporphyrin IX 13-monomethyl ester + 3 NADPH + 3 O2 + 2 H(+) = 3,8-divinyl protochlorophyllide a + 3 NADP(+) + 5 H2O. It functions in the pathway porphyrin-containing compound metabolism; chlorophyll biosynthesis (light-independent). Catalyzes the formation of the isocyclic ring in chlorophyll biosynthesis. Mediates the cyclase reaction, which results in the formation of divinylprotochlorophyllide (Pchlide) characteristic of all chlorophylls from magnesium-protoporphyrin IX 13-monomethyl ester (MgPMME). The polypeptide is Magnesium-protoporphyrin IX monomethyl ester [oxidative] cyclase 3 (Nostoc sp. (strain PCC 7120 / SAG 25.82 / UTEX 2576)).